Reading from the N-terminus, the 241-residue chain is Small ribosomal subunit protein uS3 (241 aa).

In terms of domain architecture, KH type-2 spans 39-109 (VRNYVNKNLS…PIRINVVEVA (71 aa)). Residues 213-241 (ADEQPTNREPQQRRRQQQRRRQQFEDRSE) form a disordered region.

It belongs to the universal ribosomal protein uS3 family. In terms of assembly, part of the 30S ribosomal subunit. Forms a tight complex with proteins S10 and S14.

In terms of biological role, binds the lower part of the 30S subunit head. Binds mRNA in the 70S ribosome, positioning it for translation. This is Small ribosomal subunit protein uS3 from Acaryochloris marina (strain MBIC 11017).